We begin with the raw amino-acid sequence, 186 residues long: Ribosome-recycling factor (186 aa).

The protein belongs to the RRF family.

The protein resides in the cytoplasm. In terms of biological role, responsible for the release of ribosomes from messenger RNA at the termination of protein biosynthesis. May increase the efficiency of translation by recycling ribosomes from one round of translation to another. This chain is Ribosome-recycling factor, found in Paracidovorax citrulli (strain AAC00-1) (Acidovorax citrulli).